A 395-amino-acid chain; its full sequence is N5-carboxyaminoimidazole ribonucleotide synthase (395 aa).

Residues lysine 109, lysine 149, 184–187, glutamate 192, and 268–269 each bind ATP; these read EEFI and NE. Residues 113–298 form the ATP-grasp domain; it reads RQLLTRLGLP…QFEQQLRAIA (186 aa).

Belongs to the PurK/PurT family. As to quaternary structure, homodimer.

The catalysed reaction is 5-amino-1-(5-phospho-beta-D-ribosyl)imidazole + hydrogencarbonate + ATP = 5-carboxyamino-1-(5-phospho-D-ribosyl)imidazole + ADP + phosphate + 2 H(+). The protein operates within purine metabolism; IMP biosynthesis via de novo pathway; 5-amino-1-(5-phospho-D-ribosyl)imidazole-4-carboxylate from 5-amino-1-(5-phospho-D-ribosyl)imidazole (N5-CAIR route): step 1/2. Catalyzes the ATP-dependent conversion of 5-aminoimidazole ribonucleotide (AIR) and HCO(3)(-) to N5-carboxyaminoimidazole ribonucleotide (N5-CAIR). The polypeptide is N5-carboxyaminoimidazole ribonucleotide synthase (Synechococcus elongatus (strain ATCC 33912 / PCC 7942 / FACHB-805) (Anacystis nidulans R2)).